The chain runs to 755 residues: Photosystem I P700 chlorophyll a apoprotein A1 (755 aa).

A run of 8 helical transmembrane segments spans residues 72-95 (IFSAHFGHLAVVFIWLSGMYFHGA), 158-181 (LYCTAIGGLVMAGLMLFAGWFHYH), 197-221 (LNHHLAGLLGLGSLSWAGHQIHVSL), 297-315 (TAHHHLAIAVLFIIAGHMY), 352-375 (WHAQLAINLAMMGSLSIIVAQHMY), 391-417 (LSLFTHHMWIGGFLVVGGAAHGAIFMV), 439-461 (AIISHLNWVCIFLGFHSFGLYVH), and 536-554 (FMVHHIHAFTIHVTVLILL). 2 residues coordinate [4Fe-4S] cluster: cysteine 578 and cysteine 587. Helical transmembrane passes span 594 to 615 (HVFLGLFWMYNCISVVIFHFSW) and 669 to 691 (LSAYGLLFLGAHFIWAFSLMFLF). Residue histidine 680 coordinates chlorophyll a'. Positions 688 and 696 each coordinate chlorophyll a. A phylloquinone-binding site is contributed by tryptophan 697. A helical transmembrane segment spans residues 729–749 (AVGVAHYLLGGIATTWAFFLA).

This sequence belongs to the PsaA/PsaB family. The PsaA/B heterodimer binds the P700 chlorophyll special pair and subsequent electron acceptors. PSI consists of a core antenna complex that captures photons, and an electron transfer chain that converts photonic excitation into a charge separation. The cyanobacterial PSI reaction center is composed of one copy each of PsaA,B,C,D,E,F,I,J,K,L,M and X, and forms trimeric complexes. PSI electron transfer chain: 5 chlorophyll a, 1 chlorophyll a', 2 phylloquinones and 3 4Fe-4S clusters. PSI core antenna: 90 chlorophyll a, 22 carotenoids, 3 phospholipids and 1 galactolipid. P700 is a chlorophyll a/chlorophyll a' dimer, A0 is one or more chlorophyll a, A1 is one or both phylloquinones and FX is a shared 4Fe-4S iron-sulfur center. is required as a cofactor.

Its subcellular location is the cellular thylakoid membrane. The catalysed reaction is reduced [plastocyanin] + hnu + oxidized [2Fe-2S]-[ferredoxin] = oxidized [plastocyanin] + reduced [2Fe-2S]-[ferredoxin]. Its function is as follows. PsaA and PsaB bind P700, the primary electron donor of photosystem I (PSI), as well as the electron acceptors A0, A1 and FX. PSI is a plastocyanin/cytochrome c6-ferredoxin oxidoreductase, converting photonic excitation into a charge separation, which transfers an electron from the donor P700 chlorophyll pair to the spectroscopically characterized acceptors A0, A1, FX, FA and FB in turn. Oxidized P700 is reduced on the lumenal side of the thylakoid membrane by plastocyanin or cytochrome c6. This is Photosystem I P700 chlorophyll a apoprotein A1 from Thermostichus vulcanus (Synechococcus vulcanus).